A 920-amino-acid polypeptide reads, in one-letter code: Isoleucine--tRNA ligase (920 aa).

Residues 58 to 68 (PYANGHLHLGH) carry the 'HIGH' region motif. Glu-569 lines the L-isoleucyl-5'-AMP pocket. The 'KMSKS' region motif lies at 610–614 (KMSKS). An ATP-binding site is contributed by Lys-613. Positions 895, 898, 910, and 913 each coordinate Zn(2+).

This sequence belongs to the class-I aminoacyl-tRNA synthetase family. IleS type 1 subfamily. In terms of assembly, monomer. Requires Zn(2+) as cofactor.

The protein resides in the cytoplasm. It catalyses the reaction tRNA(Ile) + L-isoleucine + ATP = L-isoleucyl-tRNA(Ile) + AMP + diphosphate. Functionally, catalyzes the attachment of isoleucine to tRNA(Ile). As IleRS can inadvertently accommodate and process structurally similar amino acids such as valine, to avoid such errors it has two additional distinct tRNA(Ile)-dependent editing activities. One activity is designated as 'pretransfer' editing and involves the hydrolysis of activated Val-AMP. The other activity is designated 'posttransfer' editing and involves deacylation of mischarged Val-tRNA(Ile). The sequence is that of Isoleucine--tRNA ligase from Helicobacter pylori (strain G27).